A 170-amino-acid polypeptide reads, in one-letter code: Odorant-binding protein 2b (170 aa).

Positions 1–15 are cleaved as a signal peptide; sequence MKTLFLGVTLGLAAA. The cysteines at positions 74 and 166 are disulfide-linked.

The protein belongs to the calycin superfamily. Lipocalin family. As to expression, strongly expressed in genital sphere organs such as the prostate and mammary glands.

Its subcellular location is the secreted. In terms of biological role, probably binds and transports small hydrophobic volatile molecules. The chain is Odorant-binding protein 2b (OBP2B) from Homo sapiens (Human).